We begin with the raw amino-acid sequence, 600 residues long: NADH-quinone oxidoreductase subunit C/D (600 aa).

Residues 1 to 190 (MVNNMTDLTA…SPFELTKAKQ (190 aa)) form an NADH dehydrogenase I subunit C region. The segment at 214–600 (DFMFLNLGPN…IDFVMSDVDR (387 aa)) is NADH dehydrogenase I subunit D.

The protein in the N-terminal section; belongs to the complex I 30 kDa subunit family. In the C-terminal section; belongs to the complex I 49 kDa subunit family. In terms of assembly, NDH-1 is composed of 13 different subunits. Subunits NuoB, CD, E, F, and G constitute the peripheral sector of the complex.

It is found in the cell inner membrane. The catalysed reaction is a quinone + NADH + 5 H(+)(in) = a quinol + NAD(+) + 4 H(+)(out). Its function is as follows. NDH-1 shuttles electrons from NADH, via FMN and iron-sulfur (Fe-S) centers, to quinones in the respiratory chain. The immediate electron acceptor for the enzyme in this species is believed to be ubiquinone. Couples the redox reaction to proton translocation (for every two electrons transferred, four hydrogen ions are translocated across the cytoplasmic membrane), and thus conserves the redox energy in a proton gradient. The sequence is that of NADH-quinone oxidoreductase subunit C/D from Escherichia coli (strain ATCC 8739 / DSM 1576 / NBRC 3972 / NCIMB 8545 / WDCM 00012 / Crooks).